The following is a 1035-amino-acid chain: DNA polymerase catalytic subunit (1035 aa).

It belongs to the DNA polymerase type-B family.

The protein resides in the host nucleus. It catalyses the reaction DNA(n) + a 2'-deoxyribonucleoside 5'-triphosphate = DNA(n+1) + diphosphate. The protein is DNA polymerase catalytic subunit (UL54) of Macaca mulatta (Rhesus macaque).